An 85-amino-acid polypeptide reads, in one-letter code: Large ribosomal subunit protein bL31B (85 aa).

This sequence belongs to the bacterial ribosomal protein bL31 family. Type B subfamily. In terms of assembly, part of the 50S ribosomal subunit.

The chain is Large ribosomal subunit protein bL31B from Staphylococcus haemolyticus (strain JCSC1435).